The sequence spans 67 residues: Large ribosomal subunit protein bL31 (67 aa).

Belongs to the bacterial ribosomal protein bL31 family. Type A subfamily. As to quaternary structure, part of the 50S ribosomal subunit.

In terms of biological role, binds the 23S rRNA. This is Large ribosomal subunit protein bL31 from Finegoldia magna (strain ATCC 29328 / DSM 20472 / WAL 2508) (Peptostreptococcus magnus).